We begin with the raw amino-acid sequence, 87 residues long: Acylphosphatase (87 aa).

In terms of domain architecture, Acylphosphatase-like spans 2-87 (RLTALVSGTV…ATGLRDFHVY (86 aa)). Residues R17 and N35 contribute to the active site.

Belongs to the acylphosphatase family.

The catalysed reaction is an acyl phosphate + H2O = a carboxylate + phosphate + H(+). The protein is Acylphosphatase (acyP) of Deinococcus geothermalis (strain DSM 11300 / CIP 105573 / AG-3a).